Consider the following 331-residue polypeptide: Lipoyl synthase (331 aa).

Residues 1–33 (MSDALIASSSEAPQSPAEQYDPTRKQKSADKTA) form a disordered region. Residues 7–19 (ASSSEAPQSPAEQ) show a composition bias toward low complexity. The span at 21–33 (DPTRKQKSADKTA) shows a compositional bias: basic and acidic residues. Positions 78, 83, 89, 104, 108, 111, and 318 each coordinate [4Fe-4S] cluster. The 219-residue stretch at 89–307 (CFGKGTATFM…EEEAYKMGFT (219 aa)) folds into the Radical SAM core domain.

The protein belongs to the radical SAM superfamily. Lipoyl synthase family. [4Fe-4S] cluster serves as cofactor.

Its subcellular location is the cytoplasm. It carries out the reaction [[Fe-S] cluster scaffold protein carrying a second [4Fe-4S](2+) cluster] + N(6)-octanoyl-L-lysyl-[protein] + 2 oxidized [2Fe-2S]-[ferredoxin] + 2 S-adenosyl-L-methionine + 4 H(+) = [[Fe-S] cluster scaffold protein] + N(6)-[(R)-dihydrolipoyl]-L-lysyl-[protein] + 4 Fe(3+) + 2 hydrogen sulfide + 2 5'-deoxyadenosine + 2 L-methionine + 2 reduced [2Fe-2S]-[ferredoxin]. It functions in the pathway protein modification; protein lipoylation via endogenous pathway; protein N(6)-(lipoyl)lysine from octanoyl-[acyl-carrier-protein]: step 2/2. Catalyzes the radical-mediated insertion of two sulfur atoms into the C-6 and C-8 positions of the octanoyl moiety bound to the lipoyl domains of lipoate-dependent enzymes, thereby converting the octanoylated domains into lipoylated derivatives. The sequence is that of Lipoyl synthase from Cupriavidus pinatubonensis (strain JMP 134 / LMG 1197) (Cupriavidus necator (strain JMP 134)).